Reading from the N-terminus, the 226-residue chain is 7-cyano-7-deazaguanine synthase (226 aa).

Residue 8 to 18 (LSGGLDSTTTL) coordinates ATP. Zn(2+)-binding residues include cysteine 188, cysteine 198, cysteine 201, and cysteine 204.

The protein belongs to the QueC family. Requires Zn(2+) as cofactor.

The catalysed reaction is 7-carboxy-7-deazaguanine + NH4(+) + ATP = 7-cyano-7-deazaguanine + ADP + phosphate + H2O + H(+). Its pathway is purine metabolism; 7-cyano-7-deazaguanine biosynthesis. In terms of biological role, catalyzes the ATP-dependent conversion of 7-carboxy-7-deazaguanine (CDG) to 7-cyano-7-deazaguanine (preQ(0)). The protein is 7-cyano-7-deazaguanine synthase of Nitrosomonas eutropha (strain DSM 101675 / C91 / Nm57).